A 298-amino-acid polypeptide reads, in one-letter code: ATP synthase gamma chain (298 aa).

The protein belongs to the ATPase gamma chain family. As to quaternary structure, F-type ATPases have 2 components, CF(1) - the catalytic core - and CF(0) - the membrane proton channel. CF(1) has five subunits: alpha(3), beta(3), gamma(1), delta(1), epsilon(1). CF(0) has three main subunits: a, b and c.

It localises to the cell inner membrane. Produces ATP from ADP in the presence of a proton gradient across the membrane. The gamma chain is believed to be important in regulating ATPase activity and the flow of protons through the CF(0) complex. The chain is ATP synthase gamma chain from Francisella tularensis subsp. mediasiatica (strain FSC147).